A 224-amino-acid polypeptide reads, in one-letter code: uncharacterized protein (224 aa).

Asp52 is an active-site residue.

This sequence belongs to the pseudouridine synthase RluA family.

It carries out the reaction a uridine in RNA = a pseudouridine in RNA. This is an uncharacterized protein from Haemophilus influenzae (strain ATCC 51907 / DSM 11121 / KW20 / Rd).